We begin with the raw amino-acid sequence, 428 residues long: Glutamyl-tRNA reductase (428 aa).

Residues 55 to 58, serine 114, 119 to 121, and glutamine 125 contribute to the substrate site; these read TCNR and ETQ. Cysteine 56 serves as the catalytic Nucleophile. 194–199 lines the NADP(+) pocket; the sequence is GAGEMI.

The protein belongs to the glutamyl-tRNA reductase family. Homodimer.

The enzyme catalyses (S)-4-amino-5-oxopentanoate + tRNA(Glu) + NADP(+) = L-glutamyl-tRNA(Glu) + NADPH + H(+). It participates in porphyrin-containing compound metabolism; protoporphyrin-IX biosynthesis; 5-aminolevulinate from L-glutamyl-tRNA(Glu): step 1/2. Its function is as follows. Catalyzes the NADPH-dependent reduction of glutamyl-tRNA(Glu) to glutamate 1-semialdehyde (GSA). The sequence is that of Glutamyl-tRNA reductase from Paraburkholderia phytofirmans (strain DSM 17436 / LMG 22146 / PsJN) (Burkholderia phytofirmans).